The primary structure comprises 682 residues: Methionine--tRNA ligase (682 aa).

The 'HIGH' region motif lies at 15–25 (PYANGAIHLGH). 4 residues coordinate Zn(2+): C146, C149, C159, and C162. Residues 331 to 335 (KMSKS) carry the 'KMSKS' region motif. Residue K334 participates in ATP binding. Residues 580 to 682 (DFAKLDLRVA…QGVKPGMQVK (103 aa)) form the tRNA-binding domain.

The protein belongs to the class-I aminoacyl-tRNA synthetase family. MetG type 1 subfamily. Homodimer. Zn(2+) serves as cofactor.

Its subcellular location is the cytoplasm. It catalyses the reaction tRNA(Met) + L-methionine + ATP = L-methionyl-tRNA(Met) + AMP + diphosphate. Its function is as follows. Is required not only for elongation of protein synthesis but also for the initiation of all mRNA translation through initiator tRNA(fMet) aminoacylation. The chain is Methionine--tRNA ligase from Pasteurella multocida (strain Pm70).